The sequence spans 389 residues: 3-ketoacyl-CoA thiolase (389 aa).

Residue Cys-91 is the Acyl-thioester intermediate of the active site. Catalysis depends on proton acceptor residues His-343 and Cys-373.

It belongs to the thiolase-like superfamily. Thiolase family. In terms of assembly, heterotetramer of two alpha chains (FadB) and two beta chains (FadA).

It is found in the cytoplasm. The enzyme catalyses an acyl-CoA + acetyl-CoA = a 3-oxoacyl-CoA + CoA. It functions in the pathway lipid metabolism; fatty acid beta-oxidation. Its function is as follows. Catalyzes the final step of fatty acid oxidation in which acetyl-CoA is released and the CoA ester of a fatty acid two carbons shorter is formed. In Pseudoalteromonas translucida (strain TAC 125), this protein is 3-ketoacyl-CoA thiolase.